Reading from the N-terminus, the 1342-residue chain is DNA-directed RNA polymerase subunit beta (1342 aa).

Belongs to the RNA polymerase beta chain family. In terms of assembly, the RNAP catalytic core consists of 2 alpha, 1 beta, 1 beta' and 1 omega subunit. When a sigma factor is associated with the core the holoenzyme is formed, which can initiate transcription.

It carries out the reaction RNA(n) + a ribonucleoside 5'-triphosphate = RNA(n+1) + diphosphate. Functionally, DNA-dependent RNA polymerase catalyzes the transcription of DNA into RNA using the four ribonucleoside triphosphates as substrates. The sequence is that of DNA-directed RNA polymerase subunit beta from Klebsiella pneumoniae (strain 342).